Reading from the N-terminus, the 277-residue chain is Probable endonuclease 4 (277 aa).

H67, H107, E141, D173, H176, H210, D223, H225, and E255 together coordinate Zn(2+).

It belongs to the AP endonuclease 2 family. Zn(2+) is required as a cofactor.

It carries out the reaction Endonucleolytic cleavage to 5'-phosphooligonucleotide end-products.. In terms of biological role, endonuclease IV plays a role in DNA repair. It cleaves phosphodiester bonds at apurinic or apyrimidinic (AP) sites, generating a 3'-hydroxyl group and a 5'-terminal sugar phosphate. The sequence is that of Probable endonuclease 4 from Haloarcula marismortui (strain ATCC 43049 / DSM 3752 / JCM 8966 / VKM B-1809) (Halobacterium marismortui).